We begin with the raw amino-acid sequence, 362 residues long: MTRVLGIETSCDETAAAVVTRGADEAPAILSNVVLSQIEEHAAFGGVVPEIAARAHVEALDGVIEAALAEAALSLDEVDAIAATAGPGLIGGLIVGLTTAKAIAAALGKPLLPVNHLEGHALTARLTDRLEFPYLLLLVSGGHTQIVHVAGVGRYERWASTIDDALGEAFDKTAKLLGLPYPGGPNVEKAAAEGDPARFAFPTPLKGEARPDFSFSGLKTAVRRAAGELAPLSEQDVADLCASFQFAVTQTLADRVARSLERFGKEHPKLQQPALVVAGGVAANAAVRGTLEDLCRKKGFRLVAPPLNLCGDNAAMIAWAGLERLESGLKQEGALAFAPRPRWPLDESAAPLFGAGKRGAKA.

Fe cation is bound by residues H116 and H120. Residues 138–142, D171, G184, and N284 each bind substrate; that span reads LVSGG. Fe cation is bound at residue D312.

The protein belongs to the KAE1 / TsaD family. Fe(2+) is required as a cofactor.

Its subcellular location is the cytoplasm. The catalysed reaction is L-threonylcarbamoyladenylate + adenosine(37) in tRNA = N(6)-L-threonylcarbamoyladenosine(37) in tRNA + AMP + H(+). Functionally, required for the formation of a threonylcarbamoyl group on adenosine at position 37 (t(6)A37) in tRNAs that read codons beginning with adenine. Is involved in the transfer of the threonylcarbamoyl moiety of threonylcarbamoyl-AMP (TC-AMP) to the N6 group of A37, together with TsaE and TsaB. TsaD likely plays a direct catalytic role in this reaction. This Chelativorans sp. (strain BNC1) protein is tRNA N6-adenosine threonylcarbamoyltransferase.